A 390-amino-acid chain; its full sequence is Lipid-A-disaccharide synthase (390 aa).

The protein belongs to the LpxB family.

It carries out the reaction a lipid X + a UDP-2-N,3-O-bis[(3R)-3-hydroxyacyl]-alpha-D-glucosamine = a lipid A disaccharide + UDP + H(+). It functions in the pathway bacterial outer membrane biogenesis; LPS lipid A biosynthesis. In terms of biological role, condensation of UDP-2,3-diacylglucosamine and 2,3-diacylglucosamine-1-phosphate to form lipid A disaccharide, a precursor of lipid A, a phosphorylated glycolipid that anchors the lipopolysaccharide to the outer membrane of the cell. The sequence is that of Lipid-A-disaccharide synthase from Paramagnetospirillum magneticum (strain ATCC 700264 / AMB-1) (Magnetospirillum magneticum).